Here is a 388-residue protein sequence, read N- to C-terminus: Chalcone synthase DIV (388 aa).

Cysteine 164 is an active-site residue.

This sequence belongs to the thiolase-like superfamily. Chalcone/stilbene synthases family.

It carries out the reaction (E)-4-coumaroyl-CoA + 3 malonyl-CoA + 3 H(+) = 2',4,4',6'-tetrahydroxychalcone + 3 CO2 + 4 CoA. Its pathway is secondary metabolite biosynthesis; flavonoid biosynthesis. Its function is as follows. The primary product of this enzyme is 4,2',4',6'-tetrahydroxychalcone (also termed naringenin-chalcone or chalcone) which can under specific conditions spontaneously isomerize into naringenin. This is Chalcone synthase DIV (CHS-DIV) from Ipomoea batatas (Sweet potato).